The sequence spans 347 residues: Methylthioribose-1-phosphate isomerase (347 aa).

Substrate contacts are provided by residues 45–47 (RGA), Arg-88, and Gln-197. The active-site Proton donor is Asp-238. 248–249 (NK) contacts substrate.

The protein belongs to the eIF-2B alpha/beta/delta subunits family. MtnA subfamily.

It carries out the reaction 5-(methylsulfanyl)-alpha-D-ribose 1-phosphate = 5-(methylsulfanyl)-D-ribulose 1-phosphate. It functions in the pathway amino-acid biosynthesis; L-methionine biosynthesis via salvage pathway; L-methionine from S-methyl-5-thio-alpha-D-ribose 1-phosphate: step 1/6. Its function is as follows. Catalyzes the interconversion of methylthioribose-1-phosphate (MTR-1-P) into methylthioribulose-1-phosphate (MTRu-1-P). This chain is Methylthioribose-1-phosphate isomerase, found in Trichormus variabilis (strain ATCC 29413 / PCC 7937) (Anabaena variabilis).